We begin with the raw amino-acid sequence, 96 residues long: uncharacterized protein (96 aa).

Belongs to the NifU family.

This is an uncharacterized protein from Azotobacter vinelandii.